The sequence spans 359 residues: Photosystem II protein D1 1 (359 aa).

3 consecutive transmembrane segments (helical) span residues 29–46 (YVGW…AATI), 118–133 (HFLI…EWEL), and 142–156 (WICV…AASA). H118 provides a ligand contact to chlorophyll a. A pheophytin a-binding site is contributed by Y126. D170 and E189 together coordinate [CaMn4O5] cluster. Residues 197-218 (FHMLGVAGVFGGSLFSAMHGSL) form a helical membrane-spanning segment. Residue H198 participates in chlorophyll a binding. A quinone contacts are provided by residues H215 and 264–265 (SF). Residue H215 participates in Fe cation binding. Fe cation is bound at residue H272. The helical transmembrane segment at 274-288 (FLAAWPVVGIWFTAL) threads the bilayer. 4 residues coordinate [CaMn4O5] cluster: H332, E333, D342, and A344. The propeptide occupies 345–359 (AAESTPVALQAPAIG).

This sequence belongs to the reaction center PufL/M/PsbA/D family. PSII is composed of 1 copy each of membrane proteins PsbA, PsbB, PsbC, PsbD, PsbE, PsbF, PsbH, PsbI, PsbJ, PsbK, PsbL, PsbM, PsbT, PsbX, PsbY, PsbZ, Psb30/Ycf12, peripheral proteins PsbO, CyanoQ (PsbQ), PsbU, PsbV and a large number of cofactors. It forms dimeric complexes. Requires The D1/D2 heterodimer binds P680, chlorophylls that are the primary electron donor of PSII, and subsequent electron acceptors. It shares a non-heme iron and each subunit binds pheophytin, quinone, additional chlorophylls, carotenoids and lipids. D1 provides most of the ligands for the Mn4-Ca-O5 cluster of the oxygen-evolving complex (OEC). There is also a Cl(-1) ion associated with D1 and D2, which is required for oxygen evolution. The PSII complex binds additional chlorophylls, carotenoids and specific lipids. as cofactor. In terms of processing, tyr-161 forms a radical intermediate that is referred to as redox-active TyrZ, YZ or Y-Z. Post-translationally, C-terminally processed by CtpA; processing is essential to allow assembly of the oxygen-evolving complex and thus photosynthetic growth.

The protein localises to the cellular thylakoid membrane. The enzyme catalyses 2 a plastoquinone + 4 hnu + 2 H2O = 2 a plastoquinol + O2. Photosystem II (PSII) is a light-driven water:plastoquinone oxidoreductase that uses light energy to abstract electrons from H(2)O, generating O(2) and a proton gradient subsequently used for ATP formation. It consists of a core antenna complex that captures photons, and an electron transfer chain that converts photonic excitation into a charge separation. The D1/D2 (PsbA/PsbD) reaction center heterodimer binds P680, the primary electron donor of PSII as well as several subsequent electron acceptors. The chain is Photosystem II protein D1 1 from Synechococcus sp. (strain CC9605).